A 620-amino-acid chain; its full sequence is uncharacterized protein (620 aa).

The next 4 membrane-spanning stretches (helical) occupy residues L66–I86, F238–W258, L546–I566, and I584–F604.

It localises to the cell membrane. This is an uncharacterized protein from Mycoplasma genitalium (strain ATCC 33530 / DSM 19775 / NCTC 10195 / G37) (Mycoplasmoides genitalium).